Reading from the N-terminus, the 206-residue chain is Flavin reductase (NADPH) (206 aa).

NADP(+)-binding residues include G10, T12, G13, T15, R35, S38, and R39. A Phosphoserine modification is found at S42. NADP(+) contacts are provided by D54, V55, L75, and G76. Residue S82 is modified to Phosphoserine. Positions 87, 109, 132, 153, and 154 each coordinate NADP(+). C109 acts as the S-nitroso-cysteine intermediate; for S-nitroso-CoA-dependent nitrosyltransferase activity in catalysis. The active-site S-nitroso-cysteine intermediate; for S-nitroso-CoA-dependent nitrosyltransferase activity is C188.

This sequence belongs to the BLVRB family. As to quaternary structure, monomer.

The protein localises to the cytoplasm. It carries out the reaction reduced riboflavin + NADP(+) = riboflavin + NADPH + 2 H(+). The enzyme catalyses bilirubin IXbeta + NADP(+) = biliverdin IXbeta + NADPH + H(+). The catalysed reaction is FMNH2 + NAD(+) = FMN + NADH + 2 H(+). It catalyses the reaction FMNH2 + NADP(+) = FMN + NADPH + 2 H(+). It carries out the reaction S-nitroso-CoA + L-cysteinyl-[protein] = S-nitroso-L-cysteinyl-[protein] + CoA. The enzyme catalyses L-cysteinyl-[SCAN] + S-nitroso-CoA = S-nitroso-L-cysteinyl-[SCAN] + CoA. The catalysed reaction is S-nitroso-L-cysteinyl-[SCAN] + L-cysteinyl-[protein] = L-cysteinyl-[SCAN] + S-nitroso-L-cysteinyl-[protein]. Enzyme that can both act as a NAD(P)H-dependent reductase and a S-nitroso-CoA-dependent nitrosyltransferase. Promotes fetal heme degradation during development. Also expressed in adult tissues, where it acts as a regulator of hematopoiesis, intermediary metabolism (glutaminolysis, glycolysis, TCA cycle and pentose phosphate pathway) and insulin signaling. Has a broad specificity oxidoreductase activity by catalyzing the NAD(P)H-dependent reduction of a variety of flavins, such as riboflavin, FAD or FMN, biliverdins, methemoglobin and PQQ (pyrroloquinoline quinone). Contributes to fetal heme catabolism by catalyzing reduction of biliverdin IXbeta into bilirubin IXbeta in the liver. Biliverdin IXbeta, which constitutes the major heme catabolite in the fetus is not present in adult. Does not reduce bilirubin IXalpha. Can also reduce the complexed Fe(3+) iron to Fe(2+) in the presence of FMN and NADPH. Acts as a protein nitrosyltransferase by catalyzing nitrosylation of cysteine residues of target proteins, such as HMOX2, INSR and IRS1. S-nitroso-CoA-dependent nitrosyltransferase activity is mediated via a 'ping-pong' mechanism: BLVRB first associates with both S-nitroso-CoA and protein substrate, nitric oxide group is then transferred from S-nitroso-CoA to Cys-109 and Cys-188 residues of BLVRB and from S-nitroso-BLVRB to the protein substrate. Inhibits insulin signaling by mediating nitrosylation of INSR and IRS1, leading to their inhibition. This Mus musculus (Mouse) protein is Flavin reductase (NADPH) (Blvrb).